Reading from the N-terminus, the 311-residue chain is tRNA dimethylallyltransferase (311 aa).

9–16 (GPTAVGKT) is a binding site for ATP. 11–16 (TAVGKT) provides a ligand contact to substrate. The interval 34 to 37 (DSMQ) is interaction with substrate tRNA.

The protein belongs to the IPP transferase family. As to quaternary structure, monomer. The cofactor is Mg(2+).

It carries out the reaction adenosine(37) in tRNA + dimethylallyl diphosphate = N(6)-dimethylallyladenosine(37) in tRNA + diphosphate. Catalyzes the transfer of a dimethylallyl group onto the adenine at position 37 in tRNAs that read codons beginning with uridine, leading to the formation of N6-(dimethylallyl)adenosine (i(6)A). This chain is tRNA dimethylallyltransferase, found in Clostridium botulinum (strain Hall / ATCC 3502 / NCTC 13319 / Type A).